The primary structure comprises 538 residues: Guanine nucleotide-binding protein-like 3 (538 aa).

The segment covering 1–45 (MKRPKLKKASKRMTCHKRYKIQKKVREHHRKLRKEAKKRGHKKPK) has biased composition (basic residues). Residues 1 to 125 (MKRPKLKKAS…KAKSGKQNPK (125 aa)) are disordered. The interval 2-46 (KRPKLKKASKRMTCHKRYKIQKKVREHHRKLRKEAKKRGHKKPKK) is basic. The stretch at 54–95 (APFKEALLREAELRKQQLEELKQQQKLDRQKEQERKRKLEIS) forms a coiled coil. A compositionally biased stretch (basic and acidic residues) spans 59 to 94 (ALLREAELRKQQLEELKQQQKLDRQKEQERKRKLEI). Lysine 79 is modified (N6-acetyllysine). Lysine 91 is covalently cross-linked (Glycyl lysine isopeptide (Lys-Gly) (interchain with G-Cter in SUMO2)). Phosphoserine occurs at positions 95 and 101. Over residues 95–110 (SPDDEQSNVETQEESD) the composition is skewed to acidic residues. Residues 115–125 (KKAKSGKQNPK) show a composition bias toward basic residues. Residues 129-307 (CQELKKVIEA…IIDSPCFIIS (179 aa)) form the CP-type G domain. Position 176-179 (176-179 (NKSD)) interacts with GTP. Glycyl lysine isopeptide (Lys-Gly) (interchain with G-Cter in SUMO2) cross-links involve residues lysine 177, lysine 248, lysine 262, and lysine 270. 256 to 263 (GFPNVGKS) is a GTP binding site. The segment at 277–451 (VGVSMGLTRS…HLTNKILFRS (175 aa)) is intermediate. 300-303 (DSPC) lines the GTP pocket. Composition is skewed to basic and acidic residues over residues 460–473 (EEKD…KQTE) and 481–491 (QEHVTGEKNAE). The interval 460–532 (EEKDIPEESP…KMSEEDDAYD (73 aa)) is acidic. The interval 460-538 (EEKDIPEESP…DAYDFTTDYI (79 aa)) is disordered. Phosphoserine is present on residues serine 493, serine 505, and serine 518. Residues 514 to 524 (PSDRSFILDKM) show a composition bias toward basic and acidic residues.

The protein belongs to the TRAFAC class YlqF/YawG GTPase family. Interacts with MDM2; this interaction stabilizes MDM2. Interaction with MDM2 occurs in the nucleoplasm and is triggered by a nucleolar release mechanism, such as mitosis-induced nucleolar disassembly. May interact with p53/TP53 via its basic domain. This interaction is most probably indirect and mediated by MDM2-binding. Expressed in testis.

The protein resides in the nucleus. It localises to the nucleolus. May be required to maintain the proliferative capacity of stem cells. Stabilizes MDM2 by preventing its ubiquitination, and hence proteasomal degradation. The sequence is that of Guanine nucleotide-binding protein-like 3 (Gnl3) from Rattus norvegicus (Rat).